The sequence spans 247 residues: RNA-free ribonuclease P (247 aa).

The interval 223–247 is disordered; the sequence is SPEGEKEKGEADKKKKSHSEEAEFI.

It belongs to the HARP family.

It catalyses the reaction Endonucleolytic cleavage of RNA, removing 5'-extranucleotides from tRNA precursor.. Functionally, RNA-free RNase P that catalyzes the removal of the 5'-leader sequence from pre-tRNA to produce the mature 5'-terminus. This chain is RNA-free ribonuclease P, found in Methanosarcina acetivorans (strain ATCC 35395 / DSM 2834 / JCM 12185 / C2A).